The primary structure comprises 94 residues: Co-chaperonin GroES (94 aa).

The protein belongs to the GroES chaperonin family. As to quaternary structure, heptamer of 7 subunits arranged in a ring. Interacts with the chaperonin GroEL.

Its subcellular location is the cytoplasm. Together with the chaperonin GroEL, plays an essential role in assisting protein folding. The GroEL-GroES system forms a nano-cage that allows encapsulation of the non-native substrate proteins and provides a physical environment optimized to promote and accelerate protein folding. GroES binds to the apical surface of the GroEL ring, thereby capping the opening of the GroEL channel. This chain is Co-chaperonin GroES, found in Clostridium botulinum (strain Eklund 17B / Type B).